The primary structure comprises 484 residues: Ribonuclease Y (484 aa).

Residues 18 to 38 form a helical membrane-spanning segment; it reads FFAFLFLIIIAFNLCLFAYLY. The 69-residue stretch at 166–234 folds into the KH domain; sequence SPSFLISESD…LTVRNILMND (69 aa). The 93-residue stretch at 293 to 385 folds into the HD domain; the sequence is VLSHSLETAF…TQIADKLSAA (93 aa).

Belongs to the RNase Y family.

The protein resides in the cell membrane. In terms of biological role, endoribonuclease that initiates mRNA decay. The polypeptide is Ribonuclease Y (Mycoplasma genitalium (strain ATCC 33530 / DSM 19775 / NCTC 10195 / G37) (Mycoplasmoides genitalium)).